We begin with the raw amino-acid sequence, 191 residues long: Putative glutathione-dependent formaldehyde-activating enzyme (191 aa).

In terms of domain architecture, CENP-V/GFA spans 20 to 166 (FPGGNLYCLC…FQSLGLQTYD (147 aa)). The Zn(2+) site is built by Cys27, Cys29, Cys48, Cys50, Cys53, Cys95, and Cys98.

The protein belongs to the Gfa family. Zn(2+) is required as a cofactor.

The catalysed reaction is S-(hydroxymethyl)glutathione = glutathione + formaldehyde. Its pathway is one-carbon metabolism; formaldehyde degradation; formate from formaldehyde (glutathione route): step 1/3. Catalyzes the condensation of formaldehyde and glutathione to S-hydroxymethylglutathione. This is Putative glutathione-dependent formaldehyde-activating enzyme from Aspergillus flavus (strain ATCC 200026 / FGSC A1120 / IAM 13836 / NRRL 3357 / JCM 12722 / SRRC 167).